The primary structure comprises 195 residues: Interferon tau-2 (195 aa).

An N-terminal signal peptide occupies residues 1–23 (MAFVLSLLMALVLVSYGPGGSLG). Disulfide bonds link Cys24–Cys122 and Cys52–Cys162.

The protein belongs to the alpha/beta interferon family. IFN-alphaII subfamily. In terms of tissue distribution, constitutively and exclusively expressed in the mononuclear cells of the extraembryonic trophectoderm.

It is found in the secreted. Paracrine hormone primarily responsible for maternal recognition of pregnancy. Interacts with endometrial receptors, probably type I interferon receptors, and blocks estrogen receptor expression, preventing the estrogen-induced increase in oxytocin receptor expression in the endometrium. This results in the suppression of the pulsatile endometrial release of the luteolytic hormone prostaglandin F2-alpha, hindering the regression of the corpus luteum (luteolysis) and therefore a return to ovarian cyclicity. This, and a possible direct effect of IFN-tau on prostaglandin synthesis, leads in turn to continued ovarian progesterone secretion, which stimulates the secretion by the endometrium of the nutrients required for the growth of the conceptus. In summary, displays particularly high antiviral and antiproliferative potency concurrently with particular weak cytotoxicity, high antiluteolytic activity and immunomodulatory properties. In contrast with other IFNs, IFN-tau is not virally inducible. This Ovis aries (Sheep) protein is Interferon tau-2 (IFNT2).